A 558-amino-acid polypeptide reads, in one-letter code: Glutamine--tRNA ligase (558 aa).

The short motif at 34–44 (PEPNGYLHIGH) is the 'HIGH' region element. ATP contacts are provided by residues 35–37 (EPN) and 41–47 (HIGHAKS). L-glutamine contacts are provided by D67 and Y212. Residues T231, 261 to 262 (RL), and 269 to 271 (LSK) each bind ATP. The 'KMSKS' region motif lies at 268 to 272 (VLSKR).

Belongs to the class-I aminoacyl-tRNA synthetase family. In terms of assembly, monomer.

It is found in the cytoplasm. The enzyme catalyses tRNA(Gln) + L-glutamine + ATP = L-glutaminyl-tRNA(Gln) + AMP + diphosphate. This Pseudoalteromonas atlantica (strain T6c / ATCC BAA-1087) protein is Glutamine--tRNA ligase.